A 359-amino-acid polypeptide reads, in one-letter code: Heat-inducible transcription repressor HrcA (359 aa).

The protein belongs to the HrcA family.

In terms of biological role, negative regulator of class I heat shock genes (grpE-dnaK-dnaJ and groELS operons). Prevents heat-shock induction of these operons. This is Heat-inducible transcription repressor HrcA from Sinorhizobium medicae (strain WSM419) (Ensifer medicae).